Reading from the N-terminus, the 491-residue chain is Pre-glycoprotein polyprotein GP complex (491 aa).

G2 carries the N-myristoyl glycine; by host lipid modification. Over 2-17 the chain is Extracellular; sequence GQIVTFFQEVPHVIEE. The chain crosses the membrane as a helical span at residues 18–33; the sequence is VMNIVLIALSVLAVLK. The Cytoplasmic segment spans residues 34-58; that stretch reads GLYNFATCGLVGLVTFLLLCGRSCT. C57 is a binding site for Zn(2+). At 59 to 432 the chain is on the extracellular side; sequence TSLYKGVYEL…QGKTPLGLVD (374 aa). N-linked (GlcNAc...) asparagine; by host glycans are attached at residues N79, N89, N99, N109, N119, and N167. 6 cysteine pairs are disulfide-bonded: C86–C231, C118–C155, C180–C212, C279–C292, C301–C310, and C364–C385. N224 carries N-linked (GlcNAc...) asparagine; by host glycosylation. N-linked (GlcNAc...) asparagine; by host glycosylation is found at N365, N373, N390, and N395. Residues 433-453 traverse the membrane as a helical segment; the sequence is LFVFSTSFYLISIFLHLVKIP. Topologically, residues 454-491 are cytoplasmic; sequence THRHIVGKSCPKPHRLNHMGICSCGLYKQPGVPVKWKR. Zn(2+)-binding residues include H455, H457, C463, H467, C475, and C477.

It belongs to the arenaviridae GPC protein family. In terms of assembly, interacts with glycoprotein G2. Part of the GP complex (GP-C) together with glycoprotein G1 and glycoprotein G2. The GP-complex interacts with protein Z, which interacts with ribonucleocapsid; these interactions may induce virion budding. Homotrimer; disulfide-linked. In pre-fusion state, G1 homotrimers bind G2 homotrimers via ionic interactions. Part of the GP complex (GP-C) together with glycoprotein G2 and the stable signal peptide. Interacts with the primary host receptor DAG1 on the cell surface; this interaction occurs at pH 8.0 but not at pH 6.0 and below. Upon virus internalization and at endosomal pH, interacts with the host lysosomal protein LAMP1; this interaction mediates G1 dissociation from GP-C and membrane fusion. The GP-complex interacts with protein Z, which interacts with ribonucleocapsid; these interactions may induce virion budding. As to quaternary structure, homotrimer. Interacts with the stable signal peptide. In pre-fusion state, G2 homotrimers bind G1 homotrimers via ionic interactions. Part of the GP complex (GP-C) together with glycoprotein G1 and the stable signal peptide. Acidification in the endosome triggers rearrangements, which ultimately leads to a 6 helix bundle formed by the two heptad repeat domains (HR1 and HR2) in post-fusion state. The GP-complex interacts with protein Z, which interacts with ribonucleocapsid; these interactions may induce virion budding. Post-translationally, specific enzymatic cleavages in vivo yield mature proteins. GP-C polyprotein is cleaved in the endoplasmic reticulum by the host protease MBTPS1. Only cleaved glycoprotein is incorporated into virions. The SSP remains stably associated with the GP complex following cleavage by signal peptidase and plays crucial roles in the trafficking of GP through the secretory pathway. In terms of processing, myristoylation is necessary for GP2-mediated fusion activity.

Its subcellular location is the virion membrane. It localises to the host endoplasmic reticulum membrane. The protein localises to the host Golgi apparatus membrane. It is found in the host cell membrane. Its function is as follows. Functions as a cleaved signal peptide that is retained as the third component of the GP complex (GP-C). Helps to stabilize the spike complex in its native conformation. The SSP is required for efficient glycoprotein expression, post-translational maturation cleavage of G1 and G2, glycoprotein transport to the cell surface plasma membrane, formation of infectious virus particles, and acid pH-dependent glycoprotein-mediated cell fusion. In terms of biological role, forms the virion spikes together with glycoprotein G2. The glycoprotein spike trimers are connected to the underlying matrix. Interacts with the host receptor. Mediates virus attachment to the host primary receptor alpha-dystroglycan DAG1 (alpha-DG) at the cell surface. This attachment induces virion internalization apparently through macropinocytosis. Following endocytosis, there is a pH-dependent switch from binding DAG1 to the host lysosomal receptor LAMP1. This latter binding triggers the dissociation of GP1, exposing the fusion subunit, GP2, such that fusion can occur. Down-modulates host DAG1. Forms the virion spikes together with glycoprotein G1. The glycoprotein spike trimers are connected to the underlying matrix. Class I viral fusion protein that directs fusion of viral and host endosomal membranes, leading to delivery of the nucleocapsid into the cytoplasm. Membrane fusion is mediated by irreversible conformational changes induced by acidification. The protein is Pre-glycoprotein polyprotein GP complex of Homo sapiens (Human).